We begin with the raw amino-acid sequence, 427 residues long: Enolase (427 aa).

Gln-163 lines the (2R)-2-phosphoglycerate pocket. The Proton donor role is filled by Glu-205. Mg(2+) contacts are provided by Asp-242, Glu-285, and Asp-312. (2R)-2-phosphoglycerate is bound by residues Lys-337, Arg-366, Ser-367, and Lys-388. Lys-337 acts as the Proton acceptor in catalysis.

It belongs to the enolase family. It depends on Mg(2+) as a cofactor.

The protein resides in the cytoplasm. The protein localises to the secreted. It localises to the cell surface. The catalysed reaction is (2R)-2-phosphoglycerate = phosphoenolpyruvate + H2O. Its pathway is carbohydrate degradation; glycolysis; pyruvate from D-glyceraldehyde 3-phosphate: step 4/5. Functionally, catalyzes the reversible conversion of 2-phosphoglycerate (2-PG) into phosphoenolpyruvate (PEP). It is essential for the degradation of carbohydrates via glycolysis. In Methylocella silvestris (strain DSM 15510 / CIP 108128 / LMG 27833 / NCIMB 13906 / BL2), this protein is Enolase.